The primary structure comprises 250 residues: NAD(P)H-quinone oxidoreductase subunit K (250 aa).

[4Fe-4S] cluster contacts are provided by C60, C61, C125, and C156. The interval 230–250 (ELNTSEIDASPASQPSSTYES) is disordered. The span at 231–250 (LNTSEIDASPASQPSSTYES) shows a compositional bias: polar residues.

It belongs to the complex I 20 kDa subunit family. In terms of assembly, NDH-1 can be composed of about 15 different subunits; different subcomplexes with different compositions have been identified which probably have different functions. It depends on [4Fe-4S] cluster as a cofactor.

It localises to the cellular thylakoid membrane. The enzyme catalyses a plastoquinone + NADH + (n+1) H(+)(in) = a plastoquinol + NAD(+) + n H(+)(out). It carries out the reaction a plastoquinone + NADPH + (n+1) H(+)(in) = a plastoquinol + NADP(+) + n H(+)(out). Its function is as follows. NDH-1 shuttles electrons from an unknown electron donor, via FMN and iron-sulfur (Fe-S) centers, to quinones in the respiratory and/or the photosynthetic chain. The immediate electron acceptor for the enzyme in this species is believed to be plastoquinone. Couples the redox reaction to proton translocation, and thus conserves the redox energy in a proton gradient. Cyanobacterial NDH-1 also plays a role in inorganic carbon-concentration. In Prochlorococcus marinus (strain MIT 9303), this protein is NAD(P)H-quinone oxidoreductase subunit K.